We begin with the raw amino-acid sequence, 991 residues long: Collagenase ColT (991 aa).

The N-terminal stretch at 1-28 (MKKKFIKMLCSIAIGCMISTSYSIKVSA) is a signal peptide. Positions 29-52 (FSNGNTKTNPNGEFKSLSLNSTNP) are excised as a propeptide. Residues 53-727 (YKTKYSFNDL…VYDIVFHGLL (675 aa)) are S1 metalloprotease domain, degrades FALGPA (furylacryloyl-Leu-Gly-Pro-Ala). The interval 57 to 330 (YSFNDLNKLS…AIEAIKEDFN (274 aa)) is activator domain. The interval 340-611 (DINKLIEEGK…MENLVNNYDN (272 aa)) is catalytic subdomain. Glutamate 440 serves as a coordination point for Ca(2+). Histidine 465 contacts Zn(2+). Glutamate 466 is a catalytic residue. Histidine 469 contacts Zn(2+). Residues glycine 473, isoleucine 477, and glycine 479 each contribute to the Ca(2+) site. A Zn(2+)-binding site is contributed by glutamate 499. The interval 619–731 (DDYMKQYDNK…VFHGLLSHNK (113 aa)) is helper subdomain. Collagen-binding domain regions lie at residues 755–870 (IYEK…NISD) and 878–991 (IKKI…VIIN). 11 residues coordinate Ca(2+): glutamate 757, glutamate 759, asparagine 761, aspartate 784, aspartate 787, glutamate 883, glutamate 885, asparagine 887, aspartate 888, aspartate 910, and aspartate 913.

This sequence belongs to the peptidase M9B family. Collagenase subfamily. Ca(2+) is required as a cofactor. The cofactor is Zn(2+).

The protein localises to the secreted. The enzyme catalyses Digestion of native collagen in the triple helical region at Xaa-|-Gly bonds. With synthetic peptides, a preference is shown for Gly at P3 and P1', Pro and Ala at P2 and P2', and hydroxyproline, Ala or Arg at P3'.. Its activity is regulated as follows. Partially inhibited by 1-10-phenanthroline; inactivation is irreversible. Partially inhibited by EDTA; inactivation is reversible. Inhibited by broad-spectrum zinc metalloprotease inhibitor batimastat. N-aryl mercaptoacetamide-based inhibitors have been isolated that act on clostridial collagenases with submicromolar affinity while having negligibile activity on human collagenases. Functionally, clostridial collagenases are among the most efficient degraders of eukaryotic collagen known; saprophytes use collagen as a carbon source while pathogens additionally digest collagen to aid in host colonization. Has both tripeptidylcarboxypeptidase on Gly-X-Y and endopeptidase activities; the endopeptidase cuts within the triple helix region of collagen while tripeptidylcarboxypeptidase successively digests the exposed ends, thus clostridial collagenases can digest large sections of collagen. The activator domain (residues 57-330) and catalytic subdomain (340-611) open and close around substrate allowing digestion when the protein is closed. In Clostridium tetani (strain Massachusetts / E88), this protein is Collagenase ColT.